We begin with the raw amino-acid sequence, 521 residues long: Tigger transposable element-derived protein 6 (521 aa).

In terms of domain architecture, HTH psq-type spans 3–54 (NKGNKKRRQFSLEEKMKVVGAVDSGKRKGDVAKEFGITPSTLSTFLKDRTKF). DNA-binding regions (H-T-H motif) lie at residues 30-50 (KGDV…FLKD) and 99-130 (SVIR…FRDR). Positions 66 to 137 (QRKRMRSALY…RDRHGIALKA (72 aa)) constitute an HTH CENPB-type domain. A DDE-1 domain is found at 170–372 (YSPDDIFNAD…VKPSTVVKCW (203 aa)).

This sequence belongs to the tigger transposable element derived protein family.

It localises to the nucleus. The protein is Tigger transposable element-derived protein 6 (TIGD6) of Homo sapiens (Human).